Reading from the N-terminus, the 147-residue chain is Ribonuclease H (147 aa).

Mg(2+) contacts are provided by D8, E46, D68, and D132.

This sequence belongs to the RNase H family. As to quaternary structure, monomer. Requires Mg(2+) as cofactor.

It localises to the cytoplasm. It carries out the reaction Endonucleolytic cleavage to 5'-phosphomonoester.. Functionally, endonuclease that specifically degrades the RNA of RNA-DNA hybrids. The polypeptide is Ribonuclease H (Geotalea uraniireducens (strain Rf4) (Geobacter uraniireducens)).